Reading from the N-terminus, the 122-residue chain is Small ribosomal subunit protein uS13 (122 aa).

Over residues 97 to 114 (PVRGQRTHTNAKTRKGKS) the composition is skewed to basic residues. The tract at residues 97–122 (PVRGQRTHTNAKTRKGKSRLPIAGKE) is disordered.

It belongs to the universal ribosomal protein uS13 family. As to quaternary structure, part of the 30S ribosomal subunit. Forms a loose heterodimer with protein S19. Forms two bridges to the 50S subunit in the 70S ribosome.

Located at the top of the head of the 30S subunit, it contacts several helices of the 16S rRNA. In the 70S ribosome it contacts the 23S rRNA (bridge B1a) and protein L5 of the 50S subunit (bridge B1b), connecting the 2 subunits; these bridges are implicated in subunit movement. Contacts the tRNAs in the A and P-sites. In Wolbachia sp. subsp. Brugia malayi (strain TRS), this protein is Small ribosomal subunit protein uS13.